The following is a 1202-amino-acid chain: Caskin-2 (1202 aa).

ANK repeat units follow at residues 48–77, 81–110, 114–143, 147–176, 188–217, and 220–249; these read DGFS…TVDI, NGMR…AVNA, DGQI…NPCL, AKKT…CVAL, NYTT…EINR, and KTGT…DVNI. Residue Tyr253 is modified to Phosphotyrosine. An SH3 domain is found at 281–347; that stretch reads SGILKVRALK…PPGIVEVVSK (67 aa). The disordered stretch occupies residues 355-460; it reads RLPSAPTPLR…GLHPPSLADN (106 aa). Phosphoserine occurs at positions 358, 393, 396, 403, 406, and 409. Residues 415-425 are compositionally biased toward polar residues; it reads SAGSGQSSEGT. Ser471 is subject to Phosphoserine. 2 consecutive SAM domains span residues 489–552 and 558–622; these read KDAQ…LSIA and YIPT…LAEL. Disordered stretches follow at residues 676–1104 and 1116–1181; these read LQAA…APKP and GPKL…STKH. The residue at position 725 (Ser725) is a Phosphoserine. A compositionally biased stretch (basic and acidic residues) spans 731–740; that stretch reads NLPEGTERPP. Positions 765-774 are enriched in pro residues; sequence SPAPGPPPGA. Phosphoserine occurs at positions 858, 877, 878, and 892. Positions 913–923 are enriched in pro residues; that stretch reads PSEPPGPPAPA. Residues 940 to 949 show a composition bias toward low complexity; that stretch reads PPSRGSSGEG. Pro residues-rich tracts occupy residues 966–978 and 1018–1030; these read PAGP…PVPP and PAAP…PGES. A compositionally biased stretch (low complexity) spans 1031–1051; the sequence is PPASSLPQPEPSSLPAQGVPT. Pro residues-rich tracts occupy residues 1052–1068 and 1124–1133; these read PLAP…PCPG and GPRPVPPPRP. Residues 1135-1151 are compositionally biased toward polar residues; sequence STGTVGPGQAQQRLEQT. The span at 1161–1172 shows a compositional bias: basic and acidic residues; sequence AAEKSIGTKEQE.

As to quaternary structure, may not bind CASK.

The protein localises to the cytoplasm. The polypeptide is Caskin-2 (CASKIN2) (Homo sapiens (Human)).